We begin with the raw amino-acid sequence, 704 residues long: Cystathionine beta-synthase cbs-1 (704 aa).

Residues Asn454, 562-566, and Ser652 contribute to the pyridoxal 5'-phosphate site; that span reads GTGGT.

This sequence belongs to the cysteine synthase/cystathionine beta-synthase family. In terms of assembly, monomer. Does not bind pyridoxal 5'-phosphate, PLP; which may explain why this isoform has virtually undetectable catalytic activity. Requires pyridoxal 5'-phosphate as cofactor.

The protein resides in the cytoplasm. The catalysed reaction is L-homocysteine + L-serine = L,L-cystathionine + H2O. The protein operates within amino-acid biosynthesis; L-cysteine biosynthesis; L-cysteine from L-homocysteine and L-serine: step 1/2. Functionally, hydro-lyase catalyzing the first step of the transsulfuration pathway, where the hydroxyl group of L-serine is displaced by L-homocysteine in a beta-replacement reaction to form L-cystathionine, the precursor of L-cysteine. Plays a role in maintaining homocysteine homeostasis. Involved in cold-induced somatic longevity mediated by prostaglandin E2 (PGE2) signals from adult germ cells, perhaps acting via a role in the production of hydrogen sulfide (H2S). Required for normal development. The chain is Cystathionine beta-synthase cbs-1 from Caenorhabditis elegans.